We begin with the raw amino-acid sequence, 726 residues long: Elongation factor 2 (726 aa).

In terms of domain architecture, tr-type G spans 19 to 260 (DRIRNIGICA…MVIKHLPSPP (242 aa)). Residues 28–35 (AHIDHGKT), 94–98 (DTPGH), and 148–151 (NKVD) each bind GTP. His-602 bears the Diphthamide mark.

This sequence belongs to the TRAFAC class translation factor GTPase superfamily. Classic translation factor GTPase family. EF-G/EF-2 subfamily.

It localises to the cytoplasm. In terms of biological role, catalyzes the GTP-dependent ribosomal translocation step during translation elongation. During this step, the ribosome changes from the pre-translocational (PRE) to the post-translocational (POST) state as the newly formed A-site-bound peptidyl-tRNA and P-site-bound deacylated tRNA move to the P and E sites, respectively. Catalyzes the coordinated movement of the two tRNA molecules, the mRNA and conformational changes in the ribosome. This chain is Elongation factor 2 (fusA), found in Methanocaldococcus jannaschii (strain ATCC 43067 / DSM 2661 / JAL-1 / JCM 10045 / NBRC 100440) (Methanococcus jannaschii).